The primary structure comprises 128 residues: Phosphoribosyl-AMP cyclohydrolase (128 aa).

Asp-94 provides a ligand contact to Mg(2+). Position 95 (Cys-95) interacts with Zn(2+). Residues Asp-96 and Asp-98 each coordinate Mg(2+). Residues Cys-111 and Cys-118 each contribute to the Zn(2+) site.

The protein belongs to the PRA-CH family. In terms of assembly, homodimer. The cofactor is Mg(2+). Zn(2+) is required as a cofactor.

Its subcellular location is the cytoplasm. It carries out the reaction 1-(5-phospho-beta-D-ribosyl)-5'-AMP + H2O = 1-(5-phospho-beta-D-ribosyl)-5-[(5-phospho-beta-D-ribosylamino)methylideneamino]imidazole-4-carboxamide. It participates in amino-acid biosynthesis; L-histidine biosynthesis; L-histidine from 5-phospho-alpha-D-ribose 1-diphosphate: step 3/9. Functionally, catalyzes the hydrolysis of the adenine ring of phosphoribosyl-AMP. The polypeptide is Phosphoribosyl-AMP cyclohydrolase (Streptomyces coelicolor (strain ATCC BAA-471 / A3(2) / M145)).